The primary structure comprises 72 residues: Conotoxin Lt6.3 (72 aa).

The first 22 residues, Met-1–Ser-22, serve as a signal peptide directing secretion. Positions Asp-23–Pro-46 are excised as a propeptide. Intrachain disulfides connect Cys-47–Cys-61, Cys-54–Cys-64, and Cys-60–Cys-71.

The protein belongs to the conotoxin O1 superfamily. In terms of tissue distribution, expressed by the venom duct.

It localises to the secreted. The sequence is that of Conotoxin Lt6.3 from Conus litteratus (Lettered cone).